The chain runs to 218 residues: Protein THO1 (218 aa).

Positions 4–38 (YSSLTVVQLKDLLTKRNLSVGGLKNELVQRLIKDD) constitute an SAP domain. Position 22 is a phosphoserine (S22). Disordered regions lie at residues 37–123 (DDEE…LSPE) and 177–218 (LVSR…GYRR). A compositionally biased stretch (polar residues) spans 47–57 (VSPQEQNQEQG). Phosphoserine occurs at positions 58 and 68. Over residues 72–96 (TEKKEVSSEPKETNEPKEENKDVQK) the composition is skewed to basic and acidic residues. 2 stretches are compositionally biased toward low complexity: residues 102-122 (SATA…ALSP) and 186-203 (SGNN…NNRS). Positions 204 to 218 (RVSKNRRGNRSGYRR) are enriched in basic residues.

This sequence belongs to the SAP domain-containing ribonucleoprotein family. In terms of assembly, interacts with SUB2 in the presence of RNA; this interaction facilitates RNA binding of SUB2.

Functionally, facilitates RNA binding of SUB2 and likely plays a role in mRNA export. Suppressor of the transcriptional defect of HPR1 by overexpression. This Saccharomyces cerevisiae (strain ATCC 204508 / S288c) (Baker's yeast) protein is Protein THO1 (THO1).